The sequence spans 122 residues: Large ribosomal subunit protein uL14 (122 aa).

This sequence belongs to the universal ribosomal protein uL14 family. In terms of assembly, part of the 50S ribosomal subunit. Forms a cluster with proteins L3 and L19. In the 70S ribosome, L14 and L19 interact and together make contacts with the 16S rRNA in bridges B5 and B8.

Binds to 23S rRNA. Forms part of two intersubunit bridges in the 70S ribosome. The chain is Large ribosomal subunit protein uL14 from Aeromonas salmonicida (strain A449).